Consider the following 410-residue polypeptide: Pyruvate dehydrogenase complex protein X component, mitochondrial (410 aa).

A mitochondrion-targeting transit peptide spans 1 to 30 (MLSAISKVSTLKSCTRYLTKCNYHASAKLL). The region spanning 32–108 (VKTFSMPAMS…DVGEPIAYIA (77 aa)) is the Lipoyl-binding domain. N6-lipoyllysine is present on Lys-73. Residues 169 to 210 (TLLPSVSLLLAENNISKQKALKEIAPSGSNGRLLKGDVLAYL) enclose the Peripheral subunit-binding (PSBD) domain.

This sequence belongs to the 2-oxoacid dehydrogenase family. Eukaryotic pyruvate dehydrogenase (PDH) complexes are organized as a core consisting of the oligomeric dihydrolipoamide acetyl-transferase (E2), around which are arranged multiple copies of pyruvate dehydrogenase (E1), dihydrolipoamide dehydrogenase (E3) and protein X (E3BP) bound by non-covalent bonds.

The protein resides in the mitochondrion matrix. In terms of biological role, required for anchoring dihydrolipoamide dehydrogenase (E3) to the dihydrolipoamide transacetylase (E2) core of the pyruvate dehydrogenase complexes of eukaryotes. This specific binding is essential for a functional PDH complex. This chain is Pyruvate dehydrogenase complex protein X component, mitochondrial (PDX1), found in Saccharomyces cerevisiae (strain ATCC 204508 / S288c) (Baker's yeast).